Consider the following 149-residue polypeptide: D-aminoacyl-tRNA deacylase (149 aa).

The Gly-cisPro motif, important for rejection of L-amino acids motif lies at 137–138 (GP).

The protein belongs to the DTD family. As to quaternary structure, homodimer.

The protein resides in the cytoplasm. The catalysed reaction is glycyl-tRNA(Ala) + H2O = tRNA(Ala) + glycine + H(+). It carries out the reaction a D-aminoacyl-tRNA + H2O = a tRNA + a D-alpha-amino acid + H(+). Its function is as follows. An aminoacyl-tRNA editing enzyme that deacylates mischarged D-aminoacyl-tRNAs. Also deacylates mischarged glycyl-tRNA(Ala), protecting cells against glycine mischarging by AlaRS. Acts via tRNA-based rather than protein-based catalysis; rejects L-amino acids rather than detecting D-amino acids in the active site. By recycling D-aminoacyl-tRNA to D-amino acids and free tRNA molecules, this enzyme counteracts the toxicity associated with the formation of D-aminoacyl-tRNA entities in vivo and helps enforce protein L-homochirality. In Clostridioides difficile (strain 630) (Peptoclostridium difficile), this protein is D-aminoacyl-tRNA deacylase.